Here is a 224-residue protein sequence, read N- to C-terminus: Deoxyguanosine kinase (224 aa).

8–16 (GPIGAGKSS) contacts ATP. Substrate contacts are provided by Glu32, Tyr44, and Gln55. The Proton acceptor role is filled by Asp78. Substrate contacts are provided by Arg79, Asp84, and Glu149.

The protein belongs to the DCK/DGK family. As to quaternary structure, heterodimer of a deoxyadenosine (DAK) and a deoxyguanosine kinase (DGK).

The catalysed reaction is 2'-deoxyguanosine + ATP = dGMP + ADP + H(+). Functionally, DGK/DAK plays an essential role in generating the deoxyribonucleotide precursors, dGTP and dATP, for DNA metabolism. The protein is Deoxyguanosine kinase of Lactobacillus johnsonii (strain CNCM I-12250 / La1 / NCC 533).